Reading from the N-terminus, the 389-residue chain is S-adenosylmethionine synthase (389 aa).

Histidine 15 serves as a coordination point for ATP. Aspartate 17 provides a ligand contact to Mg(2+). Residue glutamate 43 coordinates K(+). Residues glutamate 56 and glutamine 99 each coordinate L-methionine. Residues 99–109 are flexible loop; that stretch reads QSPDIAQGVNE. Residues 166–168, 234–235, aspartate 243, 249–250, alanine 266, and lysine 270 contribute to the ATP site; these read DAK, RF, and RK. Residue aspartate 243 participates in L-methionine binding. An L-methionine-binding site is contributed by lysine 274.

It belongs to the AdoMet synthase family. In terms of assembly, homotetramer; dimer of dimers. It depends on Mg(2+) as a cofactor. K(+) is required as a cofactor.

The protein localises to the cytoplasm. The enzyme catalyses L-methionine + ATP + H2O = S-adenosyl-L-methionine + phosphate + diphosphate. Its pathway is amino-acid biosynthesis; S-adenosyl-L-methionine biosynthesis; S-adenosyl-L-methionine from L-methionine: step 1/1. Its function is as follows. Catalyzes the formation of S-adenosylmethionine (AdoMet) from methionine and ATP. The overall synthetic reaction is composed of two sequential steps, AdoMet formation and the subsequent tripolyphosphate hydrolysis which occurs prior to release of AdoMet from the enzyme. The chain is S-adenosylmethionine synthase from Neisseria meningitidis serogroup C (strain 053442).